The sequence spans 838 residues: MNLVKIEKKWQKIWEQNEVFKVKEILNKIKRYILPMFPYPSGKAHVGHVRNYTICDVIARFERSQGHNVLHAMGWDAFGLPAENAAMQNNTYPNSWVSSNVDVMRQQLKAIGLSYDWSREIITCSSQYYVHEQRFFLEMLKKGLVYQKESLVNWDPIDQTVLANEQVINGKGWRSGAIIEYRNLKQWFIKITNYADALLKGLDSLKGWPESVKTMQKKWIGQSTGININFQLKGIEASVKVFSTRPETLFGASFIALSYNHNLVQQYVNTTPETQKFIDKCSNVGTSNVNIDKMKIAVLTNLKVIHPLNSSIELPVILSNFVLMDYGTGALFGCPAHDERDHEIAKLLKLNIKQVITSTERNIDVLKEAYVGDGIMINSFHLNGLTTTEARQKVINELQHKNIGQQVTNYKLKDWGISRQRFWGCPIPIIHCKSCGAVPVPYEDLPVILPEHGVEFTGKGNPLDNHHSWKYVKCPKCHLDAVRETDTFDTFFESSWYFARFCNPTSDDMVDAKAAKYWLPVDQYIGGIEHAVMHLLYARFITRVMYDLKYIDIQEPFTSLITQGMVLHRTYQDKSNNWLYPNEVEVDSNGQLRCKADLQYVTVGKLEKMSKSKKNVVDLELVLKLYGADVARMFVLSDTPPEKDLEWSTEGIEGCYKFIQKLYNFALKLKNINLTDNKIDKVLLSKTHKTIKNVTQDIISCRLNKAIARLRELYNLIFKMSELTVQIKESFLILIRLFNPFIPHLSEEIWSLLSGRGEMLVELPWPKYEEKYIHEEEHITIAIQINGKLRSLYNCLIDTPEHDVQSAILKLEQVKKHIGDKEVRKCIFVPNKLINIII.

The 'HIGH' region signature appears at 38 to 48 (PYPSGKAHVGH). A 'KMSKS' region motif is present at residues 608–612 (KMSKS). Lys611 lines the ATP pocket.

The protein belongs to the class-I aminoacyl-tRNA synthetase family.

It is found in the cytoplasm. It catalyses the reaction tRNA(Leu) + L-leucine + ATP = L-leucyl-tRNA(Leu) + AMP + diphosphate. This Orientia tsutsugamushi (strain Boryong) (Rickettsia tsutsugamushi) protein is Leucine--tRNA ligase.